The following is a 91-amino-acid chain: Putative defensin-like protein 221 (91 aa).

The signal sequence occupies residues 1-19 (MKTLFFFLTIAVLVSSCTS). 3 cysteine pairs are disulfide-bonded: cysteine 61/cysteine 78, cysteine 64/cysteine 83, and cysteine 68/cysteine 85.

It belongs to the DEFL family.

Its subcellular location is the secreted. This chain is Putative defensin-like protein 221, found in Arabidopsis thaliana (Mouse-ear cress).